We begin with the raw amino-acid sequence, 353 residues long: Photosystem II protein D1 (353 aa).

A run of 3 helical transmembrane segments spans residues 29–46 (YVGW…TATI), 118–133 (HFLI…EWEL), and 142–156 (WICV…AATA). H118 is a chlorophyll a binding site. Position 126 (Y126) interacts with pheophytin a. 2 residues coordinate [CaMn4O5] cluster: D170 and E189. A helical transmembrane segment spans residues 197 to 218 (FHMLGVAGVFGGSLFSAMHGSL). H198 lines the chlorophyll a pocket. A quinone contacts are provided by residues H215 and 264–265 (SF). A Fe cation-binding site is contributed by H215. Residue H272 participates in Fe cation binding. Residues 274–288 (FLAAWPVVGIWFTSL) traverse the membrane as a helical segment. Positions 332, 333, 342, and 344 each coordinate [CaMn4O5] cluster. Positions 345–353 (AVKAPSIIG) are excised as a propeptide.

This sequence belongs to the reaction center PufL/M/PsbA/D family. In terms of assembly, PSII is composed of 1 copy each of membrane proteins PsbA, PsbB, PsbC, PsbD, PsbE, PsbF, PsbH, PsbI, PsbJ, PsbK, PsbL, PsbM, PsbT, PsbX, PsbY, PsbZ, Psb30/Ycf12, peripheral proteins PsbO, CyanoQ (PsbQ), PsbU, PsbV and a large number of cofactors. It forms dimeric complexes. The D1/D2 heterodimer binds P680, chlorophylls that are the primary electron donor of PSII, and subsequent electron acceptors. It shares a non-heme iron and each subunit binds pheophytin, quinone, additional chlorophylls, carotenoids and lipids. D1 provides most of the ligands for the Mn4-Ca-O5 cluster of the oxygen-evolving complex (OEC). There is also a Cl(-1) ion associated with D1 and D2, which is required for oxygen evolution. The PSII complex binds additional chlorophylls, carotenoids and specific lipids. serves as cofactor. In terms of processing, tyr-161 forms a radical intermediate that is referred to as redox-active TyrZ, YZ or Y-Z. Post-translationally, C-terminally processed by CtpA; processing is essential to allow assembly of the oxygen-evolving complex and thus photosynthetic growth.

It localises to the cellular thylakoid membrane. The enzyme catalyses 2 a plastoquinone + 4 hnu + 2 H2O = 2 a plastoquinol + O2. Its function is as follows. Photosystem II (PSII) is a light-driven water:plastoquinone oxidoreductase that uses light energy to abstract electrons from H(2)O, generating O(2) and a proton gradient subsequently used for ATP formation. It consists of a core antenna complex that captures photons, and an electron transfer chain that converts photonic excitation into a charge separation. The D1/D2 (PsbA/PsbD) reaction center heterodimer binds P680, the primary electron donor of PSII as well as several subsequent electron acceptors. The chain is Photosystem II protein D1 from Prochlorothrix hollandica.